Here is a 911-residue protein sequence, read N- to C-terminus: Valine--tRNA ligase (911 aa).

A 'HIGH' region motif is present at residues 53 to 63 (PNVTGTLHLGH). The 'KMSKS' region signature appears at 533-537 (KMSKS). Lys536 is an ATP binding site. A coiled-coil region spans residues 845 to 910 (KEIERLTKEL…NRLAMLRSMQ (66 aa)).

Belongs to the class-I aminoacyl-tRNA synthetase family. ValS type 1 subfamily. In terms of assembly, monomer.

The protein resides in the cytoplasm. The enzyme catalyses tRNA(Val) + L-valine + ATP = L-valyl-tRNA(Val) + AMP + diphosphate. Functionally, catalyzes the attachment of valine to tRNA(Val). As ValRS can inadvertently accommodate and process structurally similar amino acids such as threonine, to avoid such errors, it has a 'posttransfer' editing activity that hydrolyzes mischarged Thr-tRNA(Val) in a tRNA-dependent manner. The polypeptide is Valine--tRNA ligase (Symbiobacterium thermophilum (strain DSM 24528 / JCM 14929 / IAM 14863 / T)).